We begin with the raw amino-acid sequence, 23 residues long: Basic phospholipase A2 homolog CTs-K49c (23 aa).

Contains 7 disulfide bonds. As to expression, expressed by the venom gland.

It localises to the secreted. Snake venom phospholipase A2 homolog that lacks catalytic activity. Shows myotoxic activities. Induces local edema a few hours after injection (5-10 ug) in the hind paw. In Trimeresurus stejnegeri (Chinese green tree viper), this protein is Basic phospholipase A2 homolog CTs-K49c.